The primary structure comprises 187 residues: Elongation factor P (187 aa).

This sequence belongs to the elongation factor P family.

It localises to the cytoplasm. It functions in the pathway protein biosynthesis; polypeptide chain elongation. In terms of biological role, involved in peptide bond synthesis. Stimulates efficient translation and peptide-bond synthesis on native or reconstituted 70S ribosomes in vitro. Probably functions indirectly by altering the affinity of the ribosome for aminoacyl-tRNA, thus increasing their reactivity as acceptors for peptidyl transferase. The chain is Elongation factor P from Ruegeria pomeroyi (strain ATCC 700808 / DSM 15171 / DSS-3) (Silicibacter pomeroyi).